We begin with the raw amino-acid sequence, 349 residues long: Green-sensitive opsin-2 (349 aa).

Topologically, residues 1 to 36 (MNGTEGNNFYVPLSNRTGLVRSPFEYPQYYLAEPWQ) are extracellular. N-linked (GlcNAc...) asparagine glycans are attached at residues Asn2 and Asn15. Residues 37–61 (FKLLAVYMFFLICLGLPINGLTLIC) form a helical membrane-spanning segment. The Cytoplasmic portion of the chain corresponds to 62-73 (TAQHKKLRQPLN). The helical transmembrane segment at 74-99 (FILVNLAVAGAIMVCFGFTVTFYTAI) threads the bilayer. The Extracellular portion of the chain corresponds to 100–113 (NGYFALGPTGCAVE). A disulfide bridge links Cys110 with Cys187. Residues 114–133 (GFMATLGGEVALWSLVVLAI) form a helical membrane-spanning segment. Over 134-152 (ERYIVVCKPMGSFKFSSTH) the chain is Cytoplasmic. A helical membrane pass occupies residues 153–176 (ASAGIAFTWVMAMACAAPPLVGWS). Topologically, residues 177–202 (RYIPEGIQCSCGPDYYTLNPEYNNES) are extracellular. The chain crosses the membrane as a helical span at residues 203 to 230 (YVLYMFICHFILPVTIIFFTYGRLVCTV). Over 231 to 252 (KAAAAQQQDSASTQKAEREVTK) the chain is Cytoplasmic. A helical membrane pass occupies residues 253–276 (MVILMVLGFLVAWTPYATVAAWIF). Residues 277–284 (FNKGAAFS) are Extracellular-facing. The chain crosses the membrane as a helical span at residues 285–309 (AQFMAIPAFFSKTSALYNPVIYVLL). Lys296 carries the N6-(retinylidene)lysine modification. Residues 310–349 (NKQFRSCMLTTLFCGKNPLGDEESSTVSTSKTEVSSVSPA) are Cytoplasmic-facing. The tract at residues 329 to 349 (GDEESSTVSTSKTEVSSVSPA) is disordered. A compositionally biased stretch (low complexity) spans 334 to 349 (STVSTSKTEVSSVSPA).

It belongs to the G-protein coupled receptor 1 family. Opsin subfamily. Phosphorylated on some or all of the serine and threonine residues present in the C-terminal region. As to expression, the color pigments are found in the cone photoreceptor cells.

Its subcellular location is the membrane. Its function is as follows. Visual pigments are the light-absorbing molecules that mediate vision. They consist of an apoprotein, opsin, covalently linked to cis-retinal. This is Green-sensitive opsin-2 from Carassius auratus (Goldfish).